Here is an 817-residue protein sequence, read N- to C-terminus: Lon protease (817 aa).

The Lon N-terminal domain maps to valine 22–leucine 216. ATP is bound at residue glycine 368–threonine 375. Positions alanine 604 to glycine 785 constitute a Lon proteolytic domain. Residues serine 691 and lysine 734 contribute to the active site. Positions asparagine 784–lysine 817 are disordered. Positions threonine 789–lysine 817 are enriched in basic residues.

It belongs to the peptidase S16 family. As to quaternary structure, homohexamer. Organized in a ring with a central cavity.

Its subcellular location is the cytoplasm. The enzyme catalyses Hydrolysis of proteins in presence of ATP.. ATP-dependent serine protease that mediates the selective degradation of mutant and abnormal proteins as well as certain short-lived regulatory proteins. Required for cellular homeostasis and for survival from DNA damage and developmental changes induced by stress. Degrades polypeptides processively to yield small peptide fragments that are 5 to 10 amino acids long. Binds to DNA in a double-stranded, site-specific manner. In Desulfosudis oleivorans (strain DSM 6200 / JCM 39069 / Hxd3) (Desulfococcus oleovorans), this protein is Lon protease.